Reading from the N-terminus, the 390-residue chain is Centrosomal protein of 44 kDa (390 aa).

Residues 11–195 (RNLEQVLRLL…ISEDTLSPIT (185 aa)) are binds with microtubules and centrioles. Positions 233–267 (EITALQTMLAECQEKLKELTLIEKRLDCLEQKMKG) form a coiled coil. The tract at residues 323 to 347 (KNKVGRPASIPLSSRYSTASSDSTP) is disordered. Phosphoserine is present on residues S331 and S345. The segment covering 335 to 345 (SSRYSTASSDS) has biased composition (low complexity). Residue T346 is modified to Phosphothreonine. A coiled-coil region spans residues 361–385 (SEETTIQKMERMKKMFEETAELLKC).

Interacts with CROCC. Interacts with POC1B; the interaction is direct and recruits POC1B to centriolar microtubules. Binds to centriolar microtubules.

The protein localises to the cytoplasm. It localises to the cytoskeleton. The protein resides in the microtubule organizing center. It is found in the centrosome. Its subcellular location is the centriole. The protein localises to the spindle pole. It localises to the midbody. Functionally, centriole-enriched microtubule-binding protein involved in centriole biogenesis. In collaboration with CEP295 and POC1B, is required for the centriole-to-centrosome conversion by ensuring the formation of bona fide centriole wall. Functions as a linker component that maintains centrosome cohesion. Associates with CROCC and regulates its stability and localization to the centrosome. In Macaca fascicularis (Crab-eating macaque), this protein is Centrosomal protein of 44 kDa (CEP44).